The sequence spans 78 residues: UPF0335 protein RPR_04100 (78 aa).

Belongs to the UPF0335 family.

The polypeptide is UPF0335 protein RPR_04100 (Rickettsia peacockii (strain Rustic)).